Reading from the N-terminus, the 78-residue chain is Acyl carrier protein (78 aa).

In terms of domain architecture, Carrier spans 2–77 (SNIEQQVKKI…LAIDYINAHN (76 aa)). Ser-37 bears the O-(pantetheine 4'-phosphoryl)serine mark.

It belongs to the acyl carrier protein (ACP) family. In terms of processing, 4'-phosphopantetheine is transferred from CoA to a specific serine of apo-ACP by AcpS. This modification is essential for activity because fatty acids are bound in thioester linkage to the sulfhydryl of the prosthetic group.

The protein resides in the cytoplasm. Its pathway is lipid metabolism; fatty acid biosynthesis. Carrier of the growing fatty acid chain in fatty acid biosynthesis. This Neisseria meningitidis serogroup C / serotype 2a (strain ATCC 700532 / DSM 15464 / FAM18) protein is Acyl carrier protein.